The following is a 1658-amino-acid chain: Silent chromatin protein ESC1 (1658 aa).

Residues 36 to 54 (DSKMKDQHGYSRVHNDKYR) show a composition bias toward basic and acidic residues. 2 disordered regions span residues 36–76 (DSKM…SSHI) and 156–499 (TSFQ…LENE). 2 stretches are compositionally biased toward acidic residues: residues 205–214 (LENDEYELSE) and 245–254 (SNDEYAEEEG). Polar residues predominate over residues 262-286 (GQEQANVENATQISSSDSSEGQNYS). Acidic residues predominate over residues 289 to 305 (VEMELEDDIDVESDAEK). Residues 335-352 (VIEKYESDEHKVHQRYSE) are compositionally biased toward basic and acidic residues. A compositionally biased stretch (acidic residues) spans 365–375 (VDDESEDEESQ). The segment covering 386–397 (VYHHNEHELDDK) has biased composition (basic and acidic residues). Residues 398–407 (ELIEDIESSD) show a composition bias toward acidic residues. Residues 408-417 (SESQSAQESE) show a composition bias toward low complexity. Composition is skewed to basic and acidic residues over residues 425–435 (EYKMKNEKSTS), 442–461 (SESR…KVEQ), and 471–482 (DDIIRSSLDKNF). Threonine 500 is modified (phosphothreonine). A Phosphoserine modification is found at serine 532. Disordered regions lie at residues 550 to 584 (SRNS…DESE) and 589 to 608 (LKDF…GDLS). A compositionally biased stretch (polar residues) spans 568 to 577 (GHSNGSNLSG). A phosphoserine mark is found at serine 579, serine 583, serine 608, and serine 662. 3 disordered regions span residues 770–819 (SKET…EDNT), 863–964 (EMSS…VKGT), and 1082–1115 (ENNT…GSAK). Polar residues predominate over residues 800–812 (QSKNFPGVANSTD). 2 positions are modified to phosphoserine: serine 865 and serine 866. Positions 869–878 (ECVKQNDDGS) are enriched in basic and acidic residues. Polar residues predominate over residues 879–905 (KTQISFSTDSPDNFQESNDNTEFSSTK). Phosphoserine occurs at positions 888 and 911. Positions 918–931 (SLKKELTKAEVVDK) are enriched in basic and acidic residues. A compositionally biased stretch (acidic residues) spans 932–956 (LDEEESEDSYEQDYADPEPGNDEGS). Phosphoserine is present on residues serine 937, serine 1092, serine 1096, serine 1098, serine 1166, serine 1176, and serine 1178. Polar residues predominate over residues 1082 to 1096 (ENNTNMHDQVSQACS). The span at 1097–1115 (DSDRDQDSTAEKNVEGSAK) shows a compositional bias: basic and acidic residues. A compositionally biased stretch (polar residues) spans 1197–1207 (STDASVNMKSV). Residues 1197–1216 (STDASVNMKSVSSKERDSDE) form a disordered region. Phosphoserine occurs at positions 1214 and 1254. Over residues 1261–1272 (VKDKENLHKSEE) the composition is skewed to basic and acidic residues. Residues 1261–1315 (VKDKENLHKSEEPLVEGLQSEQHFEKKDHSENEEEFDTIYGDITSANIHSNAPDD) are disordered. A phosphoserine mark is found at serine 1290, serine 1326, and serine 1332. 2 disordered regions span residues 1334–1482 (RLIE…TSPE) and 1503–1658 (PATT…SVDK). Basic and acidic residues predominate over residues 1335-1366 (LIEDSRRGKNQEESDEVNTSRERDLTFEKSVN). Phosphoserine is present on residues serine 1403, serine 1409, serine 1450, and serine 1454. A compositionally biased stretch (acidic residues) spans 1407–1423 (LNSEPEEAELYELEIEG). Positions 1463–1479 (YPYSNSENITAEKSAPT) are enriched in polar residues. Basic and acidic residues predominate over residues 1507 to 1537 (LEKHDKTNVTSVLDDRSEHLSSHDVDNEPHD). The residue at position 1539 (serine 1539) is a Phosphoserine. Composition is skewed to basic and acidic residues over residues 1550-1564 (PEHQ…VEVK) and 1575-1591 (VLEE…DKSS). Serine 1590 and serine 1591 each carry phosphoserine. Over residues 1607–1626 (TKAKKKSRKRNYNSRRRKRK) the composition is skewed to basic residues. Polar residues predominate over residues 1648–1658 (RGQNTHPSVDK).

As to quaternary structure, interacts with SIR4.

Its subcellular location is the nucleus. Functionally, involved in the clustering of telomeres at the nuclear periphery, forming discrete subcompartments that accumulate a complex of histone-binding silencing factors like SIR4. Required for SIR4-mediated anchoring and partitioning of plasmids. This chain is Silent chromatin protein ESC1 (ESC1), found in Saccharomyces cerevisiae (strain ATCC 204508 / S288c) (Baker's yeast).